Consider the following 248-residue polypeptide: Ubiquinone biosynthesis O-methyltransferase (248 aa).

4 residues coordinate S-adenosyl-L-methionine: Arg-41, Gly-72, Asp-93, and Met-136.

It belongs to the methyltransferase superfamily. UbiG/COQ3 family.

The enzyme catalyses a 3-demethylubiquinol + S-adenosyl-L-methionine = a ubiquinol + S-adenosyl-L-homocysteine + H(+). It carries out the reaction a 3-(all-trans-polyprenyl)benzene-1,2-diol + S-adenosyl-L-methionine = a 2-methoxy-6-(all-trans-polyprenyl)phenol + S-adenosyl-L-homocysteine + H(+). Its pathway is cofactor biosynthesis; ubiquinone biosynthesis. O-methyltransferase that catalyzes the 2 O-methylation steps in the ubiquinone biosynthetic pathway. This chain is Ubiquinone biosynthesis O-methyltransferase, found in Bartonella bacilliformis (strain ATCC 35685 / KC583 / Herrer 020/F12,63).